The following is a 204-amino-acid chain: Fluoride-specific ion channel FluC 3 (204 aa).

Basic and acidic residues predominate over residues 1 to 16 (MRADESGPERESREPT). The disordered stretch occupies residues 1–53 (MRADESGPERESREPTHIPGAEPELGGEPTPRGEPGPGFEPGPGGEPAPSRAP). The segment covering 32-46 (RGEPGPGFEPGPGGE) has biased composition (pro residues). 4 consecutive transmembrane segments (helical) span residues 62–82 (VLAA…ALGL), 96–116 (FAVN…VLEI), 125–145 (PFAA…MVDT), and 158–178 (AFNV…GLAI). The Na(+) site is built by G133 and T136.

It belongs to the fluoride channel Fluc/FEX (TC 1.A.43) family.

It is found in the cell membrane. It carries out the reaction fluoride(in) = fluoride(out). With respect to regulation, na(+) is not transported, but it plays an essential structural role and its presence is essential for fluoride channel function. Functionally, fluoride-specific ion channel. Important for reducing fluoride concentration in the cell, thus reducing its toxicity. This is Fluoride-specific ion channel FluC 3 from Streptomyces avermitilis (strain ATCC 31267 / DSM 46492 / JCM 5070 / NBRC 14893 / NCIMB 12804 / NRRL 8165 / MA-4680).